The primary structure comprises 507 residues: Protein FAM221B (507 aa).

Disordered regions lie at residues 1-100, 154-310, and 486-507; these read MEAD…SAQS, LLSP…ESRP, and ETKR…HRPF. Positions 88-100 are enriched in polar residues; the sequence is NLPSTPSQSSAQS. Residues 167–177 show a composition bias toward acidic residues; that stretch reads SISDVQEEPLE. The span at 182–193 shows a compositional bias: polar residues; sequence ADISETEYSISD. Acidic residues-rich tracts occupy residues 208–222 and 270–281; these read PESE…EEPL and SADEEEAEEEEL. Residue S270 is modified to Phosphoserine.

Belongs to the FAM221 family.

The chain is Protein FAM221B (Fam221b) from Rattus norvegicus (Rat).